The sequence spans 470 residues: Glutamate--tRNA ligase (470 aa).

The 'HIGH' region signature appears at 12-22; that stretch reads PSPTGIFHVGG. The Zn(2+) site is built by Cys-103, Cys-105, Cys-125, and Asp-127. The 'KMSKS' region motif lies at 236-240; the sequence is KLSKR. Position 239 (Lys-239) interacts with ATP.

This sequence belongs to the class-I aminoacyl-tRNA synthetase family. Glutamate--tRNA ligase type 1 subfamily. Monomer. Zn(2+) serves as cofactor.

The protein localises to the cytoplasm. It catalyses the reaction tRNA(Glu) + L-glutamate + ATP = L-glutamyl-tRNA(Glu) + AMP + diphosphate. Its function is as follows. Catalyzes the attachment of glutamate to tRNA(Glu) in a two-step reaction: glutamate is first activated by ATP to form Glu-AMP and then transferred to the acceptor end of tRNA(Glu). The protein is Glutamate--tRNA ligase of Frankia casuarinae (strain DSM 45818 / CECT 9043 / HFP020203 / CcI3).